We begin with the raw amino-acid sequence, 296 residues long: Guided entry of tail-anchored proteins factor CAMLG (296 aa).

The segment at 1-79 (MESMAVATDG…SDKLNSLSVP (79 aa)) is disordered. Residues 1–189 (MESMAVATDG…NTTEEFDSFR (189 aa)) lie on the Cytoplasmic side of the membrane. Ser55 bears the Phosphoserine mark. A compositionally biased stretch (basic and acidic residues) spans 61-72 (SQTKSKQQDSDK). Residues 190-207 (IFRLVGCALLALGVRAFV) traverse the membrane as a helical segment. Residues 208–212 (CKYLS) are Lumenal-facing. An intrachain disulfide couples Cys208 to Cys284. Residues 213–231 (IFAPFLTLQLAYMGLYKYF) traverse the membrane as a helical segment. The Cytoplasmic portion of the chain corresponds to 232–269 (PKSEKKIKTTVLTAALLLSGIPAEVINRSMDTYSKMGE). Residues 270–288 (VFTDLCVYFFTFIFCHELL) form a helical membrane-spanning segment. Residues 289–296 (DYWGSEVP) lie on the Lumenal side of the membrane.

As to quaternary structure, component of the Golgi to ER traffic (GET) complex, which is composed of GET1/WRB, CAMLG/GET2 and GET3/TRC40. Within the complex, GET1 and CAMLG form a heterotetramer which is stabilized by phosphatidylinositol binding and which binds to the GET3 homodimer. Interacts (via C-terminus) with GET1. Interacts (via N-terminus) with GET3. GET3 shows a higher affinity for CAMLG than for GET1. Interacts (via N-terminus) with TNFRSF13B/TACI (via C-terminus). In terms of assembly, (Microbial infection) Interacts with human herpes virus 8/HHV-8 protein K7; this interaction modulates intracellular calcium concentration. In terms of tissue distribution, ubiquitous. Highest levels in brain, testis and ovary.

The protein resides in the endoplasmic reticulum membrane. Functionally, required for the post-translational delivery of tail-anchored (TA) proteins to the endoplasmic reticulum. Together with GET1/WRB, acts as a membrane receptor for soluble GET3/TRC40, which recognizes and selectively binds the transmembrane domain of TA proteins in the cytosol. Required for the stability of GET1. Stimulates calcium signaling in T cells through its involvement in elevation of intracellular calcium. Essential for the survival of peripheral follicular B cells. This Homo sapiens (Human) protein is Guided entry of tail-anchored proteins factor CAMLG.